The sequence spans 614 residues: Zinc metalloproteinase-disintegrin-like protein F1 (614 aa).

Positions 1–20 (MLQVLLVTICLAVFPYQGSS) are cleaved as a signal peptide. A propeptide spanning residues 21 to 192 (IILESGNVND…IKASQFILTP (172 aa)) is cleaved from the precursor. Residues 167-173 (PKKCGVT) carry the Cys-switch; controls maturation motif. Position 193 is a pyrrolidone carboxylic acid (Glu) (Glu-193). One can recognise a Peptidase M12B domain in the interval 202-398 (KYIKLAIVVD…HTPRCILNEP (197 aa)). The N-linked (GlcNAc...) asparagine glycan is linked to Asn-221. 3 disulfides stabilise this stretch: Cys-313/Cys-393, Cys-353/Cys-377, and Cys-355/Cys-360. Zn(2+) is bound at residue His-338. Residues 338–349 (HELGHNLGINHD) carry the Metal-binding motif. The active-site Proton acceptor is the Glu-339. Zn(2+) is bound by residues His-342 and His-348. Residues 406 to 492 (PAVCGNYVVE…ECPMDHIQKN (87 aa)) enclose the Disintegrin domain. 5 residues coordinate Ca(2+): Val-408, Asn-411, Glu-415, Glu-418, and Asp-421. 14 disulfide bridges follow: Cys-409/Cys-438, Cys-420/Cys-433, Cys-422/Cys-428, Cys-432/Cys-455, Cys-446/Cys-452, Cys-451/Cys-477, Cys-464/Cys-484, Cys-471/Cys-503, Cys-496/Cys-508, Cys-515/Cys-565, Cys-530/Cys-575, Cys-543/Cys-553, Cys-560/Cys-601, and Cys-595/Cys-607. The D/ECD-tripeptide motif lies at 470–472 (ECD). 3 residues coordinate Ca(2+): Asp-472, Glu-475, and Asp-487. N-linked (GlcNAc...) asparagine glycosylation is present at Asn-534.

It belongs to the venom metalloproteinase (M12B) family. P-III subfamily. P-IIIa sub-subfamily. Monomer. Zn(2+) is required as a cofactor. In terms of processing, N-glycosylated. Post-translationally, the N-terminus is blocked. Expressed by the venom gland (at protein level). Expressed by the venom gland.

Its subcellular location is the secreted. The alpha-fibrinogenase activity is inhibited by EDTA, but not by pefabloc. Functionally, zinc metalloprotease that has fibrinogenolytic activity. Does not have hemorrhagic activity in rats. Cleaves insulin B chain at '38-Ala-|-Leu-39' and '40-Tyr-|-Leu-41' bonds. Hydrolyzes only partially and weakly isolated extracellular matrix (ECM) bovine fibronectin and basal membrane (BM) protein human collagen IV in vitro. Murine laminin is not hydrolyzed, neither isolated nor in a solubilized BM preparation. Nidogen is hydrolyzed at '350-Ser-|-Phe-351' bond in a solubilized BM preparation. Hydrolyzes plasma proteins involved in blood coagulation in vitro. Has alpha-fibrinogenase activity cleaving human fibrinogen alpha chain at '432-Lys-|-Leu-433' bond, but does not cleave beta or gamma chains. Does not cleave fibrin. Hydrolyzes only partially bovine prothrombin at '200-Ser-|-Gly-201' bond, factor X (FX) heavy chain, and very slowly, FX light chain and plasminogen in vitro, without activating any of them. Has no effect in plasma thrombin generation. Does not inhibit platelet aggregation induced by collagen in vitro. May have a delayed pathological action as an anticoagulant in envenomed patients after they received serotherapy as it is not recognized by the venom antiserum. In Vipera ammodytes ammodytes (Western sand viper), this protein is Zinc metalloproteinase-disintegrin-like protein F1.